We begin with the raw amino-acid sequence, 93 residues long: Muconolactone Delta-isomerase (93 aa).

The protein belongs to the muconolactone Delta-isomerase family. As to quaternary structure, homodecamer.

The enzyme catalyses (S)-muconolactone = (4,5-dihydro-5-oxofuran-2-yl)-acetate. It functions in the pathway aromatic compound metabolism; beta-ketoadipate pathway; 5-oxo-4,5-dihydro-2-furylacetate from catechol: step 3/3. In Rhodococcus opacus (Nocardia opaca), this protein is Muconolactone Delta-isomerase (catC).